Here is a 537-residue protein sequence, read N- to C-terminus: Inositol phosphorylceramide glucuronosyltransferase 1 (537 aa).

Residues 6-26 (TSLWVLLLALVSIQLNGSFGS) traverse the membrane as a helical segment. The Mn(2+) site is built by Asp-124 and Asp-126. Residues 124-126 (DAD), 153-155 (NSG), 180-184 (TGGDQ), and 248-255 (HYTLGPLK) each bind substrate. His-248 contacts Mn(2+). 5 helical membrane-spanning segments follow: residues 293–313 (DELV…FCIY), 375–395 (VSVV…FAIV), 406–426 (VLVY…FLLF), 468–488 (MAFL…TALF), and 494–514 (MVGL…HLAV).

This sequence belongs to the glycosyltransferase 8 family. Glycogenin subfamily. Mn(2+) is required as a cofactor. Expressed in seedlings, roots, leaves, stems and siliques.

The protein resides in the golgi apparatus membrane. The catalysed reaction is glucuronate acceptor + UDP-alpha-D-glucuronate = acceptor beta-D-glucuronoside + UDP + H(+). It carries out the reaction a 1D-myo-inositol-1-phospho-N-[(R)-2-hydroxy-very-long-chain fatty acyl]-(R)-4-hydroxysphingoid base + UDP-alpha-D-glucuronate = an alpha-D-glucuronosyl-(1&lt;-&gt;6)-1D-myo-inositol-1-phospho-N-[(R)-2-hydroxy-very-long-chain fatty acyl]-(R)-4-hydroxysphingoid base + UDP + H(+). It functions in the pathway sphingolipid metabolism. Its function is as follows. Mediates the transfer of glucuronic acid (GlcA) from UDP-GlcA to glycosyl inositol phosphorylceramides (GIPCs). The formation of GIPCs sphingolipids is essential for pollen function, plant growth and defense. Required for global fitness. The sequence is that of Inositol phosphorylceramide glucuronosyltransferase 1 from Arabidopsis thaliana (Mouse-ear cress).